A 716-amino-acid chain; its full sequence is MMQQLLALVGALATLILTQHAEGTAPASPSPVEISVLRDCIAEAKLLVDTAYNHTQKSIMQRLRSGSASPMDLLAYFKQPVAATRRVVQAADYMHVALGLLEERLQPRGSRPFNATDVLTEPQLRLLSQASGCALQDQAERCSNKYRTITGRCNNKKHPWLGASNQALARWLPAEYEDHRSLPFGWTPGKRRNGFLLPLVRDVSNQIVRFPSKKLTSDRGRALMFMQWGQFIDHDLDFSPESPARVAFSMGVDCEKTCAQLPPCFPIKIPRNDPRIKNQRDCIPFFRSAPACPQNRNKVRNQINALTSFVDASMVYGSEVTLALRLRNRTNFLGLLATNQRFQDNGRALLPFDNLHEDPCLLTNRSARIPCFLAGDTRSSETPKLTALHTLFVREHNRLAAELRRLNPHWSGDKLYNEARKIVGAMVQIITYRDFLPLVLGRARIRRTLGPYRGYCSNVDPRVANVFTLAFRFGHTMLQPFMFRLDSQYRASAPNSHVPLSSVFFASWRIIHEGGIDPILRGLMATPAKLNRQDSMLVDELRDKLFQQVRRIGLDLAALNMQRSRDHGLPGYNAWRRFCGLSQPRNLAQLSRVLKNQDLARKFLRLYKTPDNIDIWVGAIAEPLLPGARVGPLLACLFENQFRRARDGDRFWWQKWGVFTKRQRKALRRISLSRIVCDNTGITTVSRDIFRANIYPQGFVSCSRIPKLNLSAWRGK.

The N-terminal stretch at 1–18 is a signal peptide; that stretch reads MMQQLLALVGALATLILT. Positions 19–140 are excised as a propeptide; the sequence is QHAEGTAPAS…SGCALQDQAE (122 aa). 2 N-linked (GlcNAc...) asparagine glycosylation sites follow: N53 and N114. A disulfide bridge links C142 with C153. D233 is a heme b binding site. H234 serves as the catalytic Proton acceptor. D235 provides a ligand contact to Ca(2+). 2 disulfides stabilise this stretch: C254/C264 and C258/C282. Ca(2+)-binding residues include T307, F309, D311, and S313. Residues N328 and N364 are each glycosylated (N-linked (GlcNAc...) asparagine). C360 and C371 are oxidised to a cystine. E381 and H475 together coordinate heme b. At Y489 the chain carries 3'-nitrotyrosine. 2 disulfide bridges follow: C579–C636 and C677–C702. N-linked (GlcNAc...) asparagine glycosylation is present at N709.

It belongs to the peroxidase family. XPO subfamily. Tetramer of two light chains and two heavy chains. It depends on Ca(2+) as a cofactor. Heme b is required as a cofactor.

The protein localises to the cytoplasmic granule. The enzyme catalyses 2 a phenolic donor + H2O2 = 2 a phenolic radical donor + 2 H2O. Its function is as follows. Mediates tyrosine nitration of secondary granule proteins in mature resting eosinophils. The polypeptide is Eosinophil peroxidase (Epx) (Mus musculus (Mouse)).